The primary structure comprises 228 residues: Biopolymer transport protein exbB1 (228 aa).

3 helical membrane-spanning segments follow: residues Leu11–Glu31, Leu116–Ile136, and Leu158–Gly178.

It belongs to the ExbB/TolQ family. The accessory proteins ExbB and ExbD seem to form a complex with TonB.

Its subcellular location is the cell inner membrane. Involved in the TonB-dependent energy-dependent transport of various receptor-bound substrates. Protects ExbD from proteolytic degradation and functionally stabilizes TonB. The protein is Biopolymer transport protein exbB1 (exbB1) of Vibrio cholerae serotype O1 (strain ATCC 39315 / El Tor Inaba N16961).